The following is a 109-amino-acid chain: Protein ripply2 (109 aa).

Residues Met-1–Asp-15 are compositionally biased toward polar residues. 2 disordered regions span residues Met-1–Asp-42 and Tyr-88–Arg-109. Residues Trp-20–Trp-23 carry the WRPW motif motif. A compositionally biased stretch (basic and acidic residues) spans Lys-30–Asp-42. The interval His-53–Tyr-88 is ripply homology domain. Acidic residues predominate over residues Glu-89–Arg-109.

It belongs to the ripply family. In terms of tissue distribution, first expressed in the paraxial mesoderm at the 90% epiboly stage, and subsequently confined to the presomitic mesoderm. Expressed in the rostral compartment of S-I and S-II.

The protein resides in the nucleus. Plays a role in somitogenesis. Required for somite segregation and establishment of rostrocaudal polarity in somites. This chain is Protein ripply2, found in Danio rerio (Zebrafish).